The following is a 100-amino-acid chain: NADH-quinone oxidoreductase subunit K (100 aa).

Helical transmembrane passes span 4 to 24, 28 to 48, and 60 to 80; these read LQHGLILAAILFVLGLTGLLV, LLFMLISLEVMINAAALAFIV, and VMYILAISLAAAEASIGLALL.

The protein belongs to the complex I subunit 4L family. As to quaternary structure, NDH-1 is composed of 13 different subunits. Subunits NuoA, H, J, K, L, M, N constitute the membrane sector of the complex.

The protein localises to the cell inner membrane. It catalyses the reaction a quinone + NADH + 5 H(+)(in) = a quinol + NAD(+) + 4 H(+)(out). Its function is as follows. NDH-1 shuttles electrons from NADH, via FMN and iron-sulfur (Fe-S) centers, to quinones in the respiratory chain. The immediate electron acceptor for the enzyme in this species is believed to be ubiquinone. Couples the redox reaction to proton translocation (for every two electrons transferred, four hydrogen ions are translocated across the cytoplasmic membrane), and thus conserves the redox energy in a proton gradient. This is NADH-quinone oxidoreductase subunit K from Serratia proteamaculans (strain 568).